Here is a 466-residue protein sequence, read N- to C-terminus: Alpha-1A adrenergic receptor (466 aa).

The Extracellular portion of the chain corresponds to 1-27; that stretch reads MVLLSENASEGSNCTHPPAPVNISKAI. N-linked (GlcNAc...) asparagine glycans are attached at residues Asn7, Asn13, and Asn22. Residues 28 to 51 form a helical membrane-spanning segment; it reads LLGVILGGLIIFGVLGNILVILSV. Over 52 to 64 the chain is Cytoplasmic; that stretch reads ACHRHLHSVTHYY. Residues 65 to 88 form a helical membrane-spanning segment; the sequence is IVNLAVADLLLTSTVLPFSAIFEI. Residues 89–99 are Extracellular-facing; that stretch reads LGYWAFGRVFC. A disulfide bond links Cys99 and Cys176. The chain crosses the membrane as a helical span at residues 100–122; it reads NIWAAVDVLCCTASIMGLCIISI. The Cytoplasmic segment spans residues 123–143; sequence DRYIGVSYPLRYPTIVTQRRG. A helical transmembrane segment spans residues 144 to 167; sequence VRALLCVWVLSLVISIGPLFGWRQ. The Extracellular portion of the chain corresponds to 168-181; it reads PAPEDETICQINEE. Residues 182–205 form a helical membrane-spanning segment; sequence PGYVLFSALGSFYVPLAIILVMYC. Over 206-273 the chain is Cytoplasmic; sequence RVYVVAKRES…FSREKKAAKT (68 aa). At Ser215 the chain carries Phosphoserine; by PKA. The chain crosses the membrane as a helical span at residues 274–297; sequence LGIVVGCFVLCWLPFFLVMPIGSF. At 298-305 the chain is on the extracellular side; that stretch reads FPDFKPSE. A helical transmembrane segment spans residues 306–329; sequence TVFKIVFWLGYLNSCINPIIYPCS. The Cytoplasmic portion of the chain corresponds to 330-466; the sequence is SQEFKKAFQN…ISLGENGEEV (137 aa). Positions 334–349 match the Nuclear localization signal motif; the sequence is KKAFQNVLRIQCLRRR. The S-palmitoyl cysteine moiety is linked to residue Cys345.

It belongs to the G-protein coupled receptor 1 family. Adrenergic receptor subfamily. ADRA1A sub-subfamily. In terms of assembly, homo- and heterooligomer. Heterooligomerizes with ADRA1B homooligomers in cardiac myocytes. Interacts with CAVIN4. In terms of processing, C-terminal Ser or Thr residues may be phosphorylated. In terms of tissue distribution, abundant in heart, brain, aorta, vena cava, vas deferens, submaxillary gland, lung, and kidney. Found at lower levels in prostate, parotid gland and skeletal muscle.

It localises to the nucleus membrane. The protein resides in the cell membrane. The protein localises to the cytoplasm. It is found in the membrane. Its subcellular location is the caveola. Functionally, this alpha-adrenergic receptor mediates its action by association with G proteins that activate a phosphatidylinositol-calcium second messenger system. Its effect is mediated by G(q) and G(11) proteins. Nuclear ADRA1A-ADRA1B heterooligomers regulate phenylephrine (PE)-stimulated ERK signaling in cardiac myocytes. This is Alpha-1A adrenergic receptor (Adra1a) from Rattus norvegicus (Rat).